Here is a 353-residue protein sequence, read N- to C-terminus: Phosphate acyltransferase (353 aa).

This sequence belongs to the PlsX family. Homodimer. Probably interacts with PlsY.

The protein localises to the cytoplasm. It catalyses the reaction a fatty acyl-[ACP] + phosphate = an acyl phosphate + holo-[ACP]. It participates in lipid metabolism; phospholipid metabolism. Catalyzes the reversible formation of acyl-phosphate (acyl-PO(4)) from acyl-[acyl-carrier-protein] (acyl-ACP). This enzyme utilizes acyl-ACP as fatty acyl donor, but not acyl-CoA. This chain is Phosphate acyltransferase, found in Afipia carboxidovorans (strain ATCC 49405 / DSM 1227 / KCTC 32145 / OM5) (Oligotropha carboxidovorans).